We begin with the raw amino-acid sequence, 144 residues long: Large ribosomal subunit protein uL13 (144 aa).

This sequence belongs to the universal ribosomal protein uL13 family. In terms of assembly, part of the 50S ribosomal subunit.

In terms of biological role, this protein is one of the early assembly proteins of the 50S ribosomal subunit, although it is not seen to bind rRNA by itself. It is important during the early stages of 50S assembly. The protein is Large ribosomal subunit protein uL13 of Clostridium perfringens (strain ATCC 13124 / DSM 756 / JCM 1290 / NCIMB 6125 / NCTC 8237 / Type A).